A 303-amino-acid chain; its full sequence is Glycine--tRNA ligase alpha subunit (303 aa).

It belongs to the class-II aminoacyl-tRNA synthetase family. As to quaternary structure, tetramer of two alpha and two beta subunits.

It is found in the cytoplasm. It catalyses the reaction tRNA(Gly) + glycine + ATP = glycyl-tRNA(Gly) + AMP + diphosphate. This Bordetella pertussis (strain Tohama I / ATCC BAA-589 / NCTC 13251) protein is Glycine--tRNA ligase alpha subunit.